Consider the following 1288-residue polypeptide: Structural maintenance of chromosomes protein 4 (1288 aa).

A compositionally biased stretch (polar residues) spans 1–10 (MPRKGTQPST). A disordered region spans residues 1–55 (MPRKGTQPSTARRREEGPPPPSPDGASSDAEPEPPSGRTESPATAAETASEELDN). Ser22 and Ser28 each carry phosphoserine. A Phosphothreonine modification is found at Thr39. Residues 39 to 48 (TESPATAAET) are compositionally biased toward low complexity. Phosphoserine occurs at positions 41 and 50. ATP is bound at residue 113–120 (GPNGSGKS). Phosphoserine is present on Ser143. Residues 272 to 588 (RRVEILNEHR…LFQKVEEAKS (317 aa)) are a coiled coil. N6-acetyllysine is present on residues Lys381 and Lys679. An SMC hinge domain is found at 613 to 727 (PGIYGRLGDL…ADNLDQATRV (115 aa)). A coiled-coil region spans residues 767-1020 (LVIEISEEEV…ALSIKLKLEQ (254 aa)). Ser982 and Ser1056 each carry phosphoserine. Positions 1109–1129 (ELDKITYERDSFRQAYEDLRK) form a coiled coil.

Belongs to the SMC family. SMC4 subfamily. In terms of assembly, forms a heterodimer with SMC2. Component of the condensin complex, which contains the SMC2 and SMC4 heterodimer, and three non SMC subunits that probably regulate the complex: BRRN1/CAPH, CNAP1/CAPD2 and CAPG. In terms of tissue distribution, widely expressed. Higher expression in testis, colon, thymus.

It localises to the nucleus. It is found in the cytoplasm. The protein localises to the chromosome. Functionally, central component of the condensin complex, a complex required for conversion of interphase chromatin into mitotic-like condense chromosomes. The condensin complex probably introduces positive supercoils into relaxed DNA in the presence of type I topoisomerases and converts nicked DNA into positive knotted forms in the presence of type II topoisomerases. The protein is Structural maintenance of chromosomes protein 4 (SMC4) of Homo sapiens (Human).